Reading from the N-terminus, the 1347-residue chain is MENLPFPLKLLSASSLNAPSSTPWVLDIFLTLVFALGFFFLLLPYLSYFRCDDPPSPSPGKRKCPVGRRRRPRGRMKNHSLRAGRECRRGLEETSDLLSQLQSLLGPHLDKGDFGQLSGPDPPGEVGERAPDGASQSSHEPMEDAAPILSLLASPDPQAKHPQDLASTPSPGPMTTSVSSLSASQPPEPSLPLEHPSPEPPALFPHPPHTPDPLACSLPPPKGFTAPPLRDSTLITPSHCDSVALPLGTVPQSLSPHEDLVASVPAISGLGGSNSHVSASSRWQETARTSCAFNSSVQQDHLSRHPPETCQMEAGSLFLLSSDGQNVVGIQVTETAKVNIWEEKENVGSFTNRMTPEKHLNSLRNLAKSLDAEQDTTNPKPFWNMGENSKQLPGPQKLSDPRLWQESFWKNYSQLFWGLPSLHSESLVANAWVTDRSYTLQSPPFLFNEMSNVCPIQRETTMSPLLFQAQPLSHLGPECQPFISSTPQFRPTPMAQAEAQAHLQSSFPVLSPAFPSLIQNTGVACPASQNKVQALSLPETQHPEWPLLRRQLEGRLALPSRVQKSQDVFSVSTPNLPQESLTSILPENFPVSPELRRQLEQHIKKWIIQHWGNLGRIQESLDLMQLQDESPGTSQAKGKPSPWQSSMSTGESSKEAQKVKFQLERDPCPHLGQILGETPQNLSRDMKSFPRKVLGVTSEELERNLRKPLRSDSGSDLLRCTERTHIENILKAHMGRNLGQTNEGLIPVRVRRSWLAVNQALPVSNTHVKTSNLAAPKSGKACVNTAQVLSFLEPCTQQGLGAHIVRFWAKHRWGLPLRVLKPIQCFKLEKVSSLSLTQLAGPSSATCESGAGSEVEVDMFLRKPPMASLRKQVLTKASDHMPESLLASSPAWKQFQRAPRGIPSWNDHEPLKPPPAGQEGRWPSKPLTYSLTGSTQQSRSLGAQSSKAGETREAVPQCRVPLETCMLANLQATSEDVHGFEAPGTSKSSLHPRVSVSQDPRKLCLMEEVVSEFEPGMATKSETQPQVCAAVVLLPDGQASVVPHASENLVSQVPQGHLQSMPTGNMRASQELHDLMAARRSKLVHEEPRKPNCQGSCKSQRPMFPPIHKSEKFRKPNLEKHEERLEGLRTPQLTPVRKTEDTHQDEGVQLLPSKKQPPSVSPFGENIKQIFQWIFSKKKSKPAPVTAESQKTVKNRSCVYSSSAEAQGLMTAVGQMLDEKMSLCHARHASKVNQHKQKFQAPVCGFPCNHRHLFYSEHGRILSYAASSQQATLKSQGCPNRDRQIRNQQPLKSVRCNNEQWGLRHPQILHPKKAVSPVSPPQHWPKTSGASSHHHHCPRHCLLWEGI.

The helical transmembrane segment at 23-43 threads the bilayer; the sequence is PWVLDIFLTLVFALGFFFLLL. Disordered stretches follow at residues 55–87, 108–142, 154–235, 373–397, 627–658, 900–955, 1084–1161, and 1313–1335; these read PSPSPGKRKCPVGRRRRPRGRMKNHSLRAGREC, HLDKGDFGQLSGPDPPGEVGERAPDGASQSSHEPM, SPDP…STLI, EQDTTNPKPFWNMGENSKQLPGPQK, QDESPGTSQAKGKPSPWQSSMSTGESSKEAQK, RGIP…REAV, VHEE…PSVS, and KAVSPVSPPQHWPKTSGASSHHH. Residues 60–82 are compositionally biased toward basic residues; sequence GKRKCPVGRRRRPRGRMKNHSLR. Residues 165-178 are compositionally biased toward polar residues; sequence LASTPSPGPMTTSV. Positions 198–211 are enriched in pro residues; sequence PEPPALFPHPPHTP. 2 stretches are compositionally biased toward polar residues: residues 627–651 and 927–948; these read QDESPGTSQAKGKPSPWQSSMSTGE and LTYSLTGSTQQSRSLGAQSSKA. Composition is skewed to basic and acidic residues over residues 1108 to 1127 and 1137 to 1146; these read HKSEKFRKPNLEKHEERLEG and RKTEDTHQDE.

It belongs to the SPATA31 family.

Its subcellular location is the membrane. Its function is as follows. May play a role in spermatogenesis. The chain is Spermatogenesis-associated protein 31A3 (SPATA31A3) from Homo sapiens (Human).